The following is a 474-amino-acid chain: PTS system N-acetylmuramic acid-specific EIIBC component (474 aa).

One can recognise a PTS EIIB type-1 domain in the interval 1-89 (MAKEISSELL…SELLGEAPVQ (89 aa)). Topologically, residues 1–123 (MAKEISSELL…LAKFATIFTP (123 aa)) are cytoplasmic. Cys-29 (phosphocysteine intermediate; for EIIB activity) is an active-site residue. Residues 115-474 (AKFATIFTPL…LFGCRNVNLD (360 aa)) form the PTS EIIC type-1 domain. The helical transmembrane segment at 124 to 144 (LIPGFIAAGLLLGIATLIATV) threads the bilayer. Topologically, residues 145–157 (MHVPADAQGTLPD) are periplasmic. The chain crosses the membrane as a helical span at residues 158–178 (ALNFMKVFSKGLFTFLVILVG). At 179–180 (YN) the chain is on the cytoplasmic side. The chain crosses the membrane as a helical span at residues 181–201 (AAQAFGGTGVNGAIIAALFLL). At 202 to 217 (GYNPAATTGYYAGFHD) the chain is on the periplasmic side. Residues 218 to 238 (FFGLPIDPRGNIIGVLIAAWA) form a helical membrane-spanning segment. Over 239–260 (CARIEGMVRRFMPDDLDMLLTS) the chain is Cytoplasmic. A helical membrane pass occupies residues 261–281 (LITLLITATLAYLIIMPLGGW). Over 282–301 (LFEGMSWLFMHLNSNPLGCA) the chain is Periplasmic. A helical transmembrane segment spans residues 302–322 (VLAGLFLIAVVFGVHQGFIPV). Over 323 to 334 (YLALMDSQGFNS) the chain is Cytoplasmic. A helical membrane pass occupies residues 335–355 (LFPILSMAGAGQVGAALALYW). Residues 356–368 (RAQPHSGLRSQVR) are Periplasmic-facing. The chain crosses the membrane as a helical span at residues 369–389 (GAIIPGLLGVGEPLIYGVTLP). At 390–393 (RMKP) the chain is on the cytoplasmic side. A helical membrane pass occupies residues 394 to 414 (FITACLGGAAGGLFIGLIAWW). Residues 415 to 440 (GLPMGLNSAFGPSGLVALPLMTSAQG) lie on the Periplasmic side of the membrane. A helical transmembrane segment spans residues 441-461 (ILPAMAIYAGGILVAWVCGFI). The Cytoplasmic portion of the chain corresponds to 462–474 (FTTLFGCRNVNLD).

Its subcellular location is the cell inner membrane. The catalysed reaction is N-acetyl-beta-D-muramate(out) + N(pros)-phospho-L-histidyl-[protein] = N-acetyl-beta-D-muramate 6-phosphate(in) + L-histidyl-[protein]. Its function is as follows. The phosphoenolpyruvate-dependent sugar phosphotransferase system (sugar PTS), a major carbohydrate active transport system, catalyzes the phosphorylation of incoming sugar substrates concomitantly with their translocation across the cell membrane. This system is involved in N-acetylmuramic acid (MurNAc) transport, yielding cytoplasmic MurNAc-6-P. Is also able to take up anhydro-N-acetylmuramic acid (anhMurNAc), but cannot phosphorylate the carbon 6, probably because of the 1,6-anhydro ring. This chain is PTS system N-acetylmuramic acid-specific EIIBC component (murP), found in Shigella dysenteriae serotype 1 (strain Sd197).